The sequence spans 213 residues: Immunoglobulin lambda-like polypeptide 1 (213 aa).

A signal peptide spans 1–37 (MRPGTGQGGLEAPGEPGPNLRQRWPLLLLGLAVVTHG). The segment at 97–108 (VFGSGTQLTVLS) is j region. The interval 109 to 213 (QPKATPSVTL…EKTVAPAECS (105 aa)) is c region. One can recognise an Ig-like C1-type domain in the interval 114–208 (PSVTLFPPSS…EGSTVEKTVA (95 aa)). Cysteine 135 and cysteine 194 are oxidised to a cystine.

As to quaternary structure, associates non-covalently with VPREB1. Interacts with SYNV1/HRD1 (via N-terminus); this interaction leads to increased IGLL1 ubiquitination and degradation in pre-B cells, possibly through a lysosomal, not proteasomal, pathway. In terms of tissue distribution, expressed only in pre-B-cells and a special B-cell line (which is surface Ig negative).

It localises to the endoplasmic reticulum. It is found in the secreted. Functionally, critical for B-cell development. The protein is Immunoglobulin lambda-like polypeptide 1 (IGLL1) of Homo sapiens (Human).